Consider the following 289-residue polypeptide: UPF0276 protein BB1291 (289 aa).

The protein belongs to the UPF0276 family.

This Bordetella bronchiseptica (strain ATCC BAA-588 / NCTC 13252 / RB50) (Alcaligenes bronchisepticus) protein is UPF0276 protein BB1291.